The following is a 399-amino-acid chain: Methylmalonic aciduria type A homolog, mitochondrial (399 aa).

The transit peptide at 1 to 15 (MVVRSLLRVSRLTSA) directs the protein to the mitochondrion. GTP-binding positions include 131 to 139 (GSPGVGKSS), aspartate 274, and 310 to 312 (SIM).

This sequence belongs to the SIMIBI class G3E GTPase family. ArgK/MeaB subfamily.

Its subcellular location is the mitochondrion. Functionally, may have GTPase activity. May also bind and hydrolyze ATP. May function as chaperone. Likely to have a role in propionyl-CoA and adenosylcobalamin metabolism. The sequence is that of Methylmalonic aciduria type A homolog, mitochondrial (mmaa-1) from Caenorhabditis elegans.